A 528-amino-acid chain; its full sequence is MDAKALWQRYQEWLYFHEGLGLYLDVSRMRFDDAFVKSLLPKFDKAFADMAELEKGAIANPDENRMVGHYWLRNPDLAPTPEIAQEIVQTLEQIEAFAEKIQTGAIHPPKANRFTDIISIGIGGSALGPQFVAEALAPEFPPLKIHFIDNTDPAGIDKILTHLRNNLASTLVLVISKSGGTPEPRNGMIEVKKAYAGQNLDFAQYAVAITSTGSNLDKVAQAEGWLATFPMYDWVGGRTSEMSSVGLVPAALQGIDVRAMLEGAKEMDDATRVPEVKNNPAALLALSWYYSGNGKGEKDMVVLPYKDSLLLFSRYLQQLVMESLGKEKDLDGKTVYQGIAVYGNKGSTDQHAYVQQLREGVPNFFATLIEVLEDRNGASPEIDPGVTSGDYLSGFLLGTRQALYENQRDSITVTIPQVNARTVGALIALYERTVGLYASLVNINAYHQPGVEAGKKAAAVILDLQTKVVGLLQKEKTALSLEQIAEKIGAADQVEAIYKILRHLQANQRGVVFQGNLGQPSSLKVSIS.

Glu322 functions as the Proton donor in the catalytic mechanism. Catalysis depends on residues His351 and Lys455.

The protein belongs to the GPI family.

The protein resides in the cytoplasm. It carries out the reaction alpha-D-glucose 6-phosphate = beta-D-fructose 6-phosphate. It functions in the pathway carbohydrate biosynthesis; gluconeogenesis. It participates in carbohydrate degradation; glycolysis; D-glyceraldehyde 3-phosphate and glycerone phosphate from D-glucose: step 2/4. Its function is as follows. Catalyzes the reversible isomerization of glucose-6-phosphate to fructose-6-phosphate. The protein is Glucose-6-phosphate isomerase of Trichormus variabilis (strain ATCC 29413 / PCC 7937) (Anabaena variabilis).